A 334-amino-acid chain; its full sequence is Aspartate carbamoyltransferase catalytic subunit (334 aa).

2 residues coordinate carbamoyl phosphate: R71 and T72. L-aspartate is bound at residue K99. Residues R121, H151, and Q154 each coordinate carbamoyl phosphate. R184 and R239 together coordinate L-aspartate. Positions 280 and 281 each coordinate carbamoyl phosphate.

Belongs to the aspartate/ornithine carbamoyltransferase superfamily. ATCase family. Heterododecamer (2C3:3R2) of six catalytic PyrB chains organized as two trimers (C3), and six regulatory PyrI chains organized as three dimers (R2).

The enzyme catalyses carbamoyl phosphate + L-aspartate = N-carbamoyl-L-aspartate + phosphate + H(+). Its pathway is pyrimidine metabolism; UMP biosynthesis via de novo pathway; (S)-dihydroorotate from bicarbonate: step 2/3. In terms of biological role, catalyzes the condensation of carbamoyl phosphate and aspartate to form carbamoyl aspartate and inorganic phosphate, the committed step in the de novo pyrimidine nucleotide biosynthesis pathway. The polypeptide is Aspartate carbamoyltransferase catalytic subunit (Pseudomonas putida (Arthrobacter siderocapsulatus)).